The sequence spans 284 residues: Shikimate dehydrogenase (NADP(+)) (284 aa).

Shikimate-binding positions include 20 to 22 (SIS) and S67. K71 acts as the Proton acceptor in catalysis. D83 is a binding site for NADP(+). Residues N92 and D107 each coordinate shikimate. Residues 129–133 (GAGGA) and I227 contribute to the NADP(+) site. Y229 provides a ligand contact to shikimate. G250 is a binding site for NADP(+).

The protein belongs to the shikimate dehydrogenase family. As to quaternary structure, homodimer.

It catalyses the reaction shikimate + NADP(+) = 3-dehydroshikimate + NADPH + H(+). It participates in metabolic intermediate biosynthesis; chorismate biosynthesis; chorismate from D-erythrose 4-phosphate and phosphoenolpyruvate: step 4/7. Functionally, involved in the biosynthesis of the chorismate, which leads to the biosynthesis of aromatic amino acids. Catalyzes the reversible NADPH linked reduction of 3-dehydroshikimate (DHSA) to yield shikimate (SA). This is Shikimate dehydrogenase (NADP(+)) from Streptococcus pneumoniae (strain CGSP14).